The following is a 276-amino-acid chain: UPF0328 protein ECU08_2080 (276 aa).

A disordered region spans residues 1-24 (MGIIDVQRSHLTATPSKERDAPAH).

Belongs to the UPF0328 family.

The chain is UPF0328 protein ECU08_2080 from Encephalitozoon cuniculi (strain GB-M1) (Microsporidian parasite).